A 352-amino-acid chain; its full sequence is Macrophage-capping protein (352 aa).

Met1 is modified (N-acetylmethionine). A Gelsolin-like 1 repeat occupies 27–75; that stretch reads EKLKPVPIARESHGIFFSGDSYLVLHNGPEEASHLHLWIGQQSSRDEQG. A Nuclear localization signal motif is present at residues 139-148; the sequence is RKLYQVKGKK. Gelsolin-like repeat units lie at residues 150–190 and 265–311; these read IRAT…LERN and MNLT…KERQ. Phosphoserine is present on Ser341.

It belongs to the villin/gelsolin family. Interacts with NUP62. Interacts with NUTF2 and RAN; involved in CAPG nuclear import. In terms of processing, phosphorylated. Nuclear GCAP39 is more highly phosphorylated than cytoplasmic GCAP39. As to expression, present in a large variety of tissues and is particularly abundant in kidney and lung. Highly expressed in macrophages (at protein level).

It is found in the nucleus. Its subcellular location is the cytoplasm. The protein localises to the melanosome. The protein resides in the cell projection. It localises to the lamellipodium. It is found in the ruffle. In terms of biological role, calcium-sensitive protein which reversibly blocks the barbed ends of actin filaments but does not sever preformed actin filaments. May play an important role in macrophage function. May play a role in regulating cytoplasmic and/or nuclear structures through potential interactions with actin. May bind DNA. Uncapping occurs either when Ca(2+) falls or when the concentration of polyphosphoinositide rises, both at low and high Ca(2+). This is Macrophage-capping protein (Capg) from Mus musculus (Mouse).